A 252-amino-acid polypeptide reads, in one-letter code: Thiazole synthase (252 aa).

Lys98 (schiff-base intermediate with DXP) is an active-site residue. Residues Gly159, 185–186 (AG), and 207–208 (AS) contribute to the 1-deoxy-D-xylulose 5-phosphate site.

Belongs to the ThiG family. Homotetramer. Forms heterodimers with either ThiH or ThiS.

The protein localises to the cytoplasm. It carries out the reaction [ThiS sulfur-carrier protein]-C-terminal-Gly-aminoethanethioate + 2-iminoacetate + 1-deoxy-D-xylulose 5-phosphate = [ThiS sulfur-carrier protein]-C-terminal Gly-Gly + 2-[(2R,5Z)-2-carboxy-4-methylthiazol-5(2H)-ylidene]ethyl phosphate + 2 H2O + H(+). It participates in cofactor biosynthesis; thiamine diphosphate biosynthesis. Catalyzes the rearrangement of 1-deoxy-D-xylulose 5-phosphate (DXP) to produce the thiazole phosphate moiety of thiamine. Sulfur is provided by the thiocarboxylate moiety of the carrier protein ThiS. In vitro, sulfur can be provided by H(2)S. This Mycobacterium tuberculosis (strain ATCC 25177 / H37Ra) protein is Thiazole synthase.